The sequence spans 538 residues: (R)-citramalate synthase (538 aa).

The region spanning I3 to F268 is the Pyruvate carboxyltransferase domain.

Belongs to the alpha-IPM synthase/homocitrate synthase family.

It catalyses the reaction pyruvate + acetyl-CoA + H2O = (3R)-citramalate + CoA + H(+). Its pathway is amino-acid biosynthesis; L-isoleucine biosynthesis; 2-oxobutanoate from pyruvate: step 1/3. Its function is as follows. Catalyzes the condensation of pyruvate and acetyl-coenzyme A to form (R)-citramalate. This chain is (R)-citramalate synthase, found in Thermotoga maritima (strain ATCC 43589 / DSM 3109 / JCM 10099 / NBRC 100826 / MSB8).